The primary structure comprises 533 residues: Ribonuclease Y (533 aa).

A disordered region spans residues 16–41; it reads VERIRRRAEQDAAEQTERVRREAEQI. A compositionally biased stretch (basic and acidic residues) spans 22–41; it reads RAEQDAAEQTERVRREAEQI. One can recognise a KH domain in the interval 223-289; the sequence is VVSVLHLPSD…RITLTALVSD (67 aa). One can recognise an HD domain in the interval 349-442; that stretch reads VLAHLVESAH…TQAADQISGG (94 aa).

This sequence belongs to the RNase Y family.

Endoribonuclease that initiates mRNA decay. The polypeptide is Ribonuclease Y (Parafrankia sp. (strain EAN1pec)).